A 244-amino-acid chain; its full sequence is Putative lipoprotein LprA (244 aa).

The first 24 residues, 1 to 24 (MKHPPCSVVAAATAILAVVLAIGG), serve as a signal peptide directing secretion. Cys25 is lipidated: N-palmitoyl cysteine. Cys25 carries S-diacylglycerol cysteine lipidation.

It belongs to the LppX/LprAFG lipoprotein family.

The protein localises to the cell membrane. This chain is Putative lipoprotein LprA (lprA), found in Mycobacterium bovis (strain ATCC BAA-935 / AF2122/97).